We begin with the raw amino-acid sequence, 217 residues long: Somatotropin (217 aa).

Positions 1 to 24 (MAAGSWTSLLLAFTLLCLPQLREA) are cleaved as a signal peptide. Histidine 44 contacts Zn(2+). Residues cysteine 79 and cysteine 191 are joined by a disulfide bond. Position 132 is a phosphoserine (serine 132). Glutamate 200 is a binding site for Zn(2+). A disulfide bridge connects residues cysteine 208 and cysteine 215.

The protein belongs to the somatotropin/prolactin family.

The protein resides in the secreted. Plays an important role in growth control. Its major role in stimulating body growth is to stimulate the liver and other tissues to secrete IGF1. It stimulates both the differentiation and proliferation of myoblasts. It also stimulates amino acid uptake and protein synthesis in muscle and other tissues. This Callithrix jacchus (White-tufted-ear marmoset) protein is Somatotropin (GH1).